The sequence spans 207 residues: Uracil phosphoribosyltransferase (207 aa).

Residues Arg-77, Arg-102, and Asp-129–Ser-137 contribute to the 5-phospho-alpha-D-ribose 1-diphosphate site. Uracil contacts are provided by residues Ile-192 and Gly-197–Ala-199. A 5-phospho-alpha-D-ribose 1-diphosphate-binding site is contributed by Asp-198.

Belongs to the UPRTase family. It depends on Mg(2+) as a cofactor.

The catalysed reaction is UMP + diphosphate = 5-phospho-alpha-D-ribose 1-diphosphate + uracil. It participates in pyrimidine metabolism; UMP biosynthesis via salvage pathway; UMP from uracil: step 1/1. With respect to regulation, allosterically activated by GTP. Catalyzes the conversion of uracil and 5-phospho-alpha-D-ribose 1-diphosphate (PRPP) to UMP and diphosphate. This Mesoplasma florum (strain ATCC 33453 / NBRC 100688 / NCTC 11704 / L1) (Acholeplasma florum) protein is Uracil phosphoribosyltransferase.